The following is a 1873-amino-acid chain: Girdin (1873 aa).

The Calponin-homology (CH) domain occupies 12 to 132 (QFMTSPLVTW…KLLLLLLGCA (121 aa)). A coiled-coil region spans residues 196 to 425 (HLRRLIDERD…EMAQKQSMDE (230 aa)). Phosphoserine occurs at positions 233, 237, and 449. Coiled-coil stretches lie at residues 458–1232 (TSSK…ESKN) and 1268–1385 (HKNL…KFYD). 2 disordered regions span residues 816 to 841 (ENKSLEQETSQLEKDKKQLEKENKRL) and 1013 to 1034 (EERMVQSSIPVSGEDDKWGRES). Phosphoserine is present on S1020. S1387 bears the Phosphoserine mark. The segment at 1390–1408 (RRRGNWITLKMRKLIKSKK) is phosphoinositide-binding. Residues 1407–1416 (KKDINRERQK) show a composition bias toward basic and acidic residues. Disordered regions lie at residues 1407–1459 (KKDI…LGTK), 1560–1602 (TTSF…SNNN), and 1616–1643 (QSRPQSHSSGDFSLLHDHETWSSSGSSP). The residue at position 1417 (S1417) is a Phosphoserine; by PKB/AKT1. 4 stretches are compositionally biased toward polar residues: residues 1417 to 1430 (SLTLTPTRSDSSEG), 1445 to 1459 (VGSNSLEDGQTLGTK), 1560 to 1579 (TTSFEDISPQGISDDSSTGS), and 1616 to 1626 (QSRPQSHSSGD). Residue T1421 is modified to Phosphothreonine. The short motif at 1674–1704 (KAGSPGSEVVTLQQFLEESNKLTSIQLKSSS) is the GBA element. Phosphoserine occurs at positions 1677, 1692, and 1719. Positions 1715–1825 (SLSVSSDFLG…GTTRRTSIHD (111 aa)) are SH2-like; required for interaction with growth factor receptors. The tract at residues 1738 to 1873 (SGKTPGDFYD…KSRSREQQSS (136 aa)) is disordered. Residues 1745–1755 (FYDRRTTKPEF) show a composition bias toward basic and acidic residues. Position 1767 is a phosphotyrosine (Y1767). 3 stretches are compositionally biased toward polar residues: residues 1768-1781 (TISSAGKPTPSTQG), 1789-1801 (TSVSRQSKDSNPY), and 1809-1820 (SVISTAEGTTRR). Phosphotyrosine is present on Y1801. Phosphoserine is present on residues S1822 and S1839. Residues 1822 to 1832 (SIHDFLSKDSR) show a composition bias toward basic and acidic residues. The segment covering 1839 to 1852 (SSPPTAGSSSTTAS) has biased composition (low complexity). A compositionally biased stretch (basic and acidic residues) spans 1858–1873 (QESRNSKSRSREQQSS).

Belongs to the CCDC88 family. Homodimer. Interacts (via GBA motif) with guanine nucleotide-binding protein G(i) alpha subunits GNAI1, GNAI2 and GNAI3. Also interacts (via GNA motif) with guanine nucleotide-binding protein G(s) alpha subunit GNAS. Interaction with G(i) alpha subunits occurs before interaction with GNAS and is regulated by phosphorylation; phosphorylation at Ser-1677 enhances binding to G(i) alpha subunits while phosphorylation at Ser-1692 abolishes G(i) alpha subunit binding, promoting binding to GNAS. Interacts (via C-terminal SH2-like region) with growth factor receptors EGFR, INSR and KDR/VEGFR2 (via their autophosphorylated cytoplasmic tails). Forms a complex with EGFR and GNAI3 which leads to enhanced EGFR signaling and triggering of cell migration; ligand stimulation is required for recruitment of GNAI3 to the complex. Interacts (tyrosine-phosphorylated form) with phosphatidylinositol 3-kinase (PI3K) regulatory subunit PIK3R1/p85a (via SH2 domains); the interaction enables recruitment of PIK3R1 to the EGFR receptor, enhancing PI3K activity and cell migration. Interacts with serine/threonine-protein kinase PRKCQ; the interaction leads to phosphorylation of CCDC88A and inhibition of its guanine nucleotide exchange factor activity. Interacts (via C-terminus) with DISC1; the interaction is direct. Interacts with AKT proteins; the interaction is inhibited in the presence of DISC1. Interacts with AKT1/PKB (via C-terminus). The non-phosphorylated form interacts with phosphatidylinositol 4-phosphate [Pi(4)P] and weakly with phosphatidylinositol 3-phosphate [Pi(3)P]. Interacts with microtubules. Interacts with actin. In terms of processing, phosphorylation is induced by epidermal growth factor (EGF) in a phosphoinositide 3-kinase (PI3K)-dependent manner. Phosphorylation by AKT1/PKB is necessary for the delocalization from the cell membrane and for cell migration. Phosphorylated on tyrosine residues which promotes binding to phosphatidylinositol 3-kinase (PI3K) regulatory subunit PIK3R1/p85a and enhances PI3K activity. Tyrosine-phosphorylated by both receptor and non-receptor tyrosine kinases in vitro. Tyrosine phosphorylation is required for AKT1-dependent phosphorylation of Ser-1417. Phosphorylation at Ser-1692 by PRKCQ disrupts interaction with GNAI3 and inhibits guanine nucleotide exchange factor activity. Expressed in the dentate gyrus, pyramidal cell layer of hippocampal regions CA1 and CA3 at postnatal 15. Expressed highly in neurons. Weakly in neuron progenitors (at protein level). Expressed in the dentate granule cell layer of the hippocampus. Expressed highly in the adult testis, moderately in the brain and at a low level in the spleen, lungs and fat.

Its subcellular location is the cell membrane. The protein localises to the cytoplasm. It localises to the cytosol. The protein resides in the cytoplasmic vesicle. It is found in the cell projection. Its subcellular location is the lamellipodium. The protein localises to the cytoskeleton. It localises to the cilium basal body. The protein resides in the microtubule organizing center. It is found in the centrosome. Its subcellular location is the centriole. Its function is as follows. Bifunctional modulator of guanine nucleotide-binding proteins (G proteins). Acts as a non-receptor guanine nucleotide exchange factor which binds to and activates guanine nucleotide-binding protein G(i) alpha subunits. Also acts as a guanine nucleotide dissociation inhibitor for guanine nucleotide-binding protein G(s) subunit alpha GNAS. Essential for cell migration. Interacts in complex with G(i) alpha subunits with the EGFR receptor, retaining EGFR at the cell membrane following ligand stimulation and promoting EGFR signaling which triggers cell migration. Binding to Gi-alpha subunits displaces the beta and gamma subunits from the heterotrimeric G-protein complex which enhances phosphoinositide 3-kinase (PI3K)-dependent phosphorylation and kinase activity of AKT1/PKB. Phosphorylation of AKT1/PKB induces the phosphorylation of downstream effectors GSK3 and FOXO1/FKHR, and regulates DNA replication and cell proliferation. Binds in its tyrosine-phosphorylated form to the phosphatidylinositol 3-kinase (PI3K) regulatory subunit PIK3R1 which enables recruitment of PIK3R1 to the EGFR receptor, enhancing PI3K activity and cell migration. Plays a role as a key modulator of the AKT-mTOR signaling pathway, controlling the tempo of the process of newborn neuron integration during adult neurogenesis, including correct neuron positioning, dendritic development and synapse formation. Inhibition of G(s) subunit alpha GNAS leads to reduced cellular levels of cAMP and suppression of cell proliferation. Essential for the integrity of the actin cytoskeleton. Required for formation of actin stress fibers and lamellipodia. May be involved in membrane sorting in the early endosome. Plays a role in ciliogenesis and cilium morphology and positioning and this may partly be through regulation of the localization of scaffolding protein CROCC/Rootletin. The sequence is that of Girdin (Ccdc88a) from Mus musculus (Mouse).